A 463-amino-acid polypeptide reads, in one-letter code: Glycine--tRNA ligase (463 aa).

Residues R98 and E174 each contribute to the substrate site. ATP-binding positions include 206 to 208 (RNE), 216 to 221 (FRTREF), 290 to 291 (EL), and 334 to 337 (GADR). 221-225 (FEQME) serves as a coordination point for substrate. 330-334 (EPSLG) is a binding site for substrate.

This sequence belongs to the class-II aminoacyl-tRNA synthetase family. As to quaternary structure, homodimer.

The protein resides in the cytoplasm. The catalysed reaction is tRNA(Gly) + glycine + ATP = glycyl-tRNA(Gly) + AMP + diphosphate. Its function is as follows. Catalyzes the attachment of glycine to tRNA(Gly). The sequence is that of Glycine--tRNA ligase from Staphylococcus epidermidis (strain ATCC 35984 / DSM 28319 / BCRC 17069 / CCUG 31568 / BM 3577 / RP62A).